Consider the following 428-residue polypeptide: L-glutamyl-[BtrI acyl-carrier protein] decarboxylase (428 aa).

Lysine 49 is subject to N6-(pyridoxal phosphate)lysine. Pyridoxal 5'-phosphate-binding positions include glycine 228, 269 to 272 (ESGR), and tyrosine 375. Positions 272 and 375 each coordinate substrate.

The protein belongs to the Orn/Lys/Arg decarboxylase class-II family. Homodimer. Requires pyridoxal 5'-phosphate as cofactor.

The catalysed reaction is gamma-L-glutamyl-[BtrI ACP] + H(+) = 4-aminobutanoyl-[BtrI ACP] + CO2. Its pathway is antibiotic biosynthesis; butirosin biosynthesis. In terms of biological role, pyridoxal phosphate-dependent decarboxylase that catalyzes 1 step in the biosynthesis of the side chain of the aminoglycoside antibiotics in the biosynthetic pathway of butirosin. Able to decarboxylate L-ornithine, L-arginine, L-lysine, but not L-glutamate or any D-amino acids. Has low activity with substrates not bound to an acyl-carrier protein. This Niallia circulans (Bacillus circulans) protein is L-glutamyl-[BtrI acyl-carrier protein] decarboxylase (btrK).